The sequence spans 320 residues: UV DNA damage endonuclease (320 aa).

Belongs to the uve1/UvsE family.

Component in a DNA repair pathway. Removal of UV LIGHT damaged nucleotides. Recognizes pyrimidine dimers and cleave a phosphodiester bond immediately 5' to the lesion. The protein is UV DNA damage endonuclease of Bacillus pumilus (strain SAFR-032).